The following is a 677-amino-acid chain: MAKVNITRDLIRRQVKERGALSFERRYHVTDPFIRRLGLEAELQGHSGCVNCLEWNEKGDLLASGSDDQHTIVWDPLHHKKLLSMHTGHTANIFSVKFLPHAGDRILITGAADSKVHVHDLTVKETIHMFGDHTNRVKRIATAPMWPNTFWSAAEDGLIRQYDLRENSKHSEVLIDLTEYCGPMVEAKCLTVNPQDNNCLAVGASGPFVRLYDIRMIHNHRKSMRQSPSAGVHTFCDRQKPLPDGAAQYYVAGHLPVKLPDYNSRLRVLVATYVTFSPNGTELLVNMGGEQVYLFDLTYKQRPYTFLLPRKCHSVEVQNGKMSTNGVSNGVSNGLHLHSNGFRLPESKGCISPQVELPPYLERVKQQANEAFACQQWTQAIQLYSQAVQKAPHNAMLYGNRAAAYMKRKWDGDHYDALRDCLKAISLNPCHLKAHFRLARCLFELKYVAEALECLDDFKGKFPEQAHSSACDALGRDITAALFSKSDGEEKKAAGGGGGPVRLRSTSRKDSISEDEMVLRERSYDYQFRYCGHCNTTTDIKEANFFGSNAQYIVSGSDDGSFFIWEKETTNLVRVLQGDESIVNCLQPHPSYCFLATSGIDPVVRLWNPRPESEDLTGRVVEDMEGASQANQRRMNANPLEAMLLDMGYRITGLSSGGAGASDDEDSAEGQVQCRPS.

WD repeat units follow at residues glycine 45–serine 84, glycine 88–methionine 129, aspartate 132–glutamate 172, glycine 182–lysine 222, and arginine 265–threonine 305. Position 352 is a phosphoserine (serine 352). 2 TPR repeats span residues leucine 361–asparagine 394 and methionine 396–histidine 431. The segment at glutamate 489–lysine 509 is disordered. Serine 511 is subject to Phosphoserine. WD repeat units lie at residues asparagine 535 to valine 575 and glycine 578 to threonine 617. The interval serine 655 to serine 677 is disordered.

It participates in protein modification; protein ubiquitination. Functionally, may function as a substrate receptor for CUL4-DDB1 E3 ubiquitin-protein ligase complex. The sequence is that of WD and tetratricopeptide repeats protein 1 (Wdtc1) from Mus musculus (Mouse).